A 294-amino-acid polypeptide reads, in one-letter code: Oligopeptide transport system permease protein OppC (294 aa).

6 helical membrane passes run 27–47 (MISTIFLVAVFLIVYIYSMFL), 94–114 (IAFAVTLITLVVGNILGVITG), 127–147 (FTDFVMILPSMMIIIVFVTII), 151–171 (NSWSLIGIISIFSWIGTTRLI), 202–224 (IWPNLSTLVIAEATLVFAGNIGL), and 260–280 (WTWVPATVVILIVVLAIIFIG). The ABC transmembrane type-1 domain maps to 88–280 (ARNSFNIAFA…IVVLAIIFIG (193 aa)).

Belongs to the binding-protein-dependent transport system permease family. OppBC subfamily. In terms of assembly, the complex is composed of two ATP-binding proteins (OppD and OppF), two transmembrane proteins (OppB and OppC) and a solute-binding protein (OppA).

The protein resides in the cell membrane. Its function is as follows. Part of the ABC transporter complex OppABCDF involved in the uptake of oligopeptides. Probably responsible for the translocation of the substrate across the membrane. This chain is Oligopeptide transport system permease protein OppC, found in Lactococcus lactis subsp. cremoris (strain SK11).